The following is a 151-amino-acid chain: UPF0178 protein Spea_2958 (151 aa).

It belongs to the UPF0178 family.

The polypeptide is UPF0178 protein Spea_2958 (Shewanella pealeana (strain ATCC 700345 / ANG-SQ1)).